Here is a 414-residue protein sequence, read N- to C-terminus: Probable aminotransferase TAT2 (414 aa).

The protein belongs to the class-I pyridoxal-phosphate-dependent aminotransferase family. The cofactor is pyridoxal 5'-phosphate.

This chain is Probable aminotransferase TAT2, found in Arabidopsis thaliana (Mouse-ear cress).